A 280-amino-acid polypeptide reads, in one-letter code: 3,2-trans-enoyl-CoA isomerase (280 aa).

Residues S68–F72 and L126 contribute to the substrate site. The active-site Proton donor/acceptor is the E158. The Microbody targeting signal signature appears at H278–L280.

Belongs to the enoyl-CoA hydratase/isomerase family. Homohexamer, dimer of trimers. Interacts with DCI1.

The protein localises to the peroxisome. The enzyme catalyses a (3Z)-enoyl-CoA = a 4-saturated (2E)-enoyl-CoA. The catalysed reaction is a (3E)-enoyl-CoA = a 4-saturated (2E)-enoyl-CoA. Its pathway is lipid metabolism; fatty acid beta-oxidation. Essential for the beta oxidation of unsaturated fatty acids. In Saccharomyces cerevisiae (strain ATCC 204508 / S288c) (Baker's yeast), this protein is 3,2-trans-enoyl-CoA isomerase (ECI1).